A 270-amino-acid chain; its full sequence is Glutamate racemase (270 aa).

Substrate is bound by residues 7 to 8 (DS) and 39 to 40 (YG). Residue Cys-70 is the Proton donor/acceptor of the active site. Residue 71 to 72 (NT) participates in substrate binding. The active-site Proton donor/acceptor is Cys-194. Position 195–196 (195–196 (TH)) interacts with substrate.

Belongs to the aspartate/glutamate racemases family.

It carries out the reaction L-glutamate = D-glutamate. The protein operates within cell wall biogenesis; peptidoglycan biosynthesis. In terms of biological role, provides the (R)-glutamate required for cell wall biosynthesis. In Cereibacter sphaeroides (strain ATCC 17025 / ATH 2.4.3) (Rhodobacter sphaeroides), this protein is Glutamate racemase.